Here is a 994-residue protein sequence, read N- to C-terminus: Alpha-mannosidase F (994 aa).

The signal sequence occupies residues 1–20; sequence MKNFYYFILILLFFNEVCYS. The Zn(2+) site is built by H35, D37, and D151. The Nucleophile role is filled by D151. 2 N-linked (GlcNAc...) asparagine glycosylation sites follow: N247 and N381. Position 392 (H392) interacts with Zn(2+). N-linked (GlcNAc...) asparagine glycosylation is found at N554, N712, and N932.

Belongs to the glycosyl hydrolase 38 family. Requires Zn(2+) as cofactor.

The protein resides in the secreted. The catalysed reaction is Hydrolysis of terminal, non-reducing alpha-D-mannose residues in alpha-D-mannosides.. The chain is Alpha-mannosidase F (manF) from Dictyostelium discoideum (Social amoeba).